Consider the following 220-residue polypeptide: Cell surface glycolipoprotein MPB83 (220 aa).

The signal sequence occupies residues 1–24; that stretch reads MINVQAKPAAAASLAAIAIAFLAG. A lipid anchor (N-palmitoyl cysteine) is attached at C25. C25 carries the S-diacylglycerol cysteine lipid modification. 2 O-linked (Man...) threonine glycosylation sites follow: T48 and T49. The FAS1 domain occupies 83–215; the sequence is QDPVATAASN…ATVYMIDTVL (133 aa).

Interacts with host (human) TLR2. Post-translationally, O-glycosylated. Contains 0-3 mannose residues attached to residues 48-49 in various configurations; the dominant glycoform is Thr-48(Man)/Thr-49(Man2) with an unusual Man(1-&gt;3)Man linkage, but Thr48(Man3)/Thr49(Man0) through to Thr48(Man0/)Thr49(Man3) are also seen. In terms of processing, when isolated from culture filtrate runs as 25 and 23 kDa proteins; the larger protein is much less abundant, mostly associated with the cell and starts at residue 28, the shorter is more abundant and starts at residue 48.

The protein localises to the cell membrane. It is found in the secreted. It localises to the cell wall. In terms of biological role, induces expression of human (host) matrix metalloproteinase-9 (MMP9) in a TLR1/TLR2-dependent fashion; the acylated 20 first mature residues (residues 25-40) induce the most expression, but whole recombinant protein (non-acylated and non-glycosylated), and mannosylated but not acylated protein (residues 26-220) also induce expression. This is Cell surface glycolipoprotein MPB83 (mpb83) from Mycobacterium bovis (strain ATCC BAA-935 / AF2122/97).